The sequence spans 160 residues: Transcription elongation factor GreA (160 aa).

A coiled-coil region spans residues 1-72 (MAEKTYPMTL…QISSLETKIR (72 aa)).

It belongs to the GreA/GreB family.

In terms of biological role, necessary for efficient RNA polymerase transcription elongation past template-encoded arresting sites. The arresting sites in DNA have the property of trapping a certain fraction of elongating RNA polymerases that pass through, resulting in locked ternary complexes. Cleavage of the nascent transcript by cleavage factors such as GreA or GreB allows the resumption of elongation from the new 3'terminus. GreA releases sequences of 2 to 3 nucleotides. This is Transcription elongation factor GreA from Streptococcus pneumoniae serotype 4 (strain ATCC BAA-334 / TIGR4).